The chain runs to 341 residues: ATP-dependent 6-phosphofructokinase 3 (341 aa).

ATP-binding positions include Gly-10, 72–73 (RV), and 102–105 (GEGT). Residue Glu-103 participates in Mg(2+) binding. Residues 125–127 (TID), Arg-162, 169–171 (MGR), Glu-222, Arg-266, and 272–275 (HVQR) contribute to the substrate site. Asp-127 acts as the Proton acceptor in catalysis.

Belongs to the phosphofructokinase type A (PFKA) family. Mixed-substrate PFK group III subfamily. As to quaternary structure, homodimer or homotetramer. It depends on Mg(2+) as a cofactor.

It localises to the cytoplasm. It catalyses the reaction beta-D-fructose 6-phosphate + ATP = beta-D-fructose 1,6-bisphosphate + ADP + H(+). Its pathway is carbohydrate degradation; glycolysis; D-glyceraldehyde 3-phosphate and glycerone phosphate from D-glucose: step 3/4. Functionally, catalyzes the phosphorylation of D-fructose 6-phosphate to fructose 1,6-bisphosphate by ATP, the first committing step of glycolysis. The chain is ATP-dependent 6-phosphofructokinase 3 from Streptomyces coelicolor (strain ATCC BAA-471 / A3(2) / M145).